The chain runs to 115 residues: Ribonuclease P protein component (115 aa).

It belongs to the RnpA family. In terms of assembly, consists of a catalytic RNA component (M1 or rnpB) and a protein subunit.

It catalyses the reaction Endonucleolytic cleavage of RNA, removing 5'-extranucleotides from tRNA precursor.. Functionally, RNaseP catalyzes the removal of the 5'-leader sequence from pre-tRNA to produce the mature 5'-terminus. It can also cleave other RNA substrates such as 4.5S RNA. The protein component plays an auxiliary but essential role in vivo by binding to the 5'-leader sequence and broadening the substrate specificity of the ribozyme. The chain is Ribonuclease P protein component from Bacillus cereus (strain B4264).